The sequence spans 335 residues: uncharacterized protein (335 aa).

3 Solcar repeats span residues 22–129 (VKPI…LLPL), 134–227 (GFPA…IRLF), and 244–327 (KDLY…TKKY). The next 6 membrane-spanning stretches (helical) occupy residues 28 to 48 (MLSA…LDVV), 104 to 123 (GLVP…FLGY), 133 to 154 (WGFP…ATIV), 195 to 219 (GILN…FYWW), 246 to 263 (LYIN…ATLL), and 307 to 323 (CVKV…SYHL).

This sequence belongs to the mitochondrial carrier (TC 2.A.29) family.

It localises to the mitochondrion inner membrane. This is an uncharacterized protein from Schizosaccharomyces pombe (strain 972 / ATCC 24843) (Fission yeast).